Here is a 121-residue protein sequence, read N- to C-terminus: Basic phospholipase A2 BmTX-I (121 aa).

7 disulfides stabilise this stretch: cysteine 26–cysteine 114, cysteine 28–cysteine 45, cysteine 44–cysteine 95, cysteine 50–cysteine 121, cysteine 51–cysteine 88, cysteine 58–cysteine 82, and cysteine 76–cysteine 86. Positions 27, 29, and 31 each coordinate Ca(2+). Histidine 48 is a catalytic residue. Aspartate 49 provides a ligand contact to Ca(2+). Aspartate 89 is a catalytic residue.

It depends on Ca(2+) as a cofactor. As to expression, expressed by the venom gland.

It is found in the secreted. The enzyme catalyses a 1,2-diacyl-sn-glycero-3-phosphocholine + H2O = a 1-acyl-sn-glycero-3-phosphocholine + a fatty acid + H(+). With respect to regulation, inhibited by magnesium, cadmium and manganese ions. Also inhibited by crotapotin. Its function is as follows. Snake venom phospholipase A2 (PLA2) that shows enzymatic activity in the presence of a synthetic substrate. In vitro, blocks the neuromuscular transmission in young chick biventer cervicis preparations. In mice, induces myonecrosis and a systemic interleukin-6 response upon intramuscular injection. Also induces edema and exerts a strong pro-inflammatory effect. PLA2 catalyzes the calcium-dependent hydrolysis of the 2-acyl groups in 3-sn-phosphoglycerides. This is Basic phospholipase A2 BmTX-I from Bothrops moojeni (Lance-headed viper).